The sequence spans 236 residues: 2-C-methyl-D-erythritol 4-phosphate cytidylyltransferase (236 aa).

Belongs to the IspD/TarI cytidylyltransferase family. IspD subfamily.

It carries out the reaction 2-C-methyl-D-erythritol 4-phosphate + CTP + H(+) = 4-CDP-2-C-methyl-D-erythritol + diphosphate. Its pathway is isoprenoid biosynthesis; isopentenyl diphosphate biosynthesis via DXP pathway; isopentenyl diphosphate from 1-deoxy-D-xylulose 5-phosphate: step 2/6. Its function is as follows. Catalyzes the formation of 4-diphosphocytidyl-2-C-methyl-D-erythritol from CTP and 2-C-methyl-D-erythritol 4-phosphate (MEP). The protein is 2-C-methyl-D-erythritol 4-phosphate cytidylyltransferase of Pseudomonas syringae pv. syringae (strain B728a).